The sequence spans 260 residues: NAD-capped RNA hydrolase NudC (260 aa).

Substrate is bound by residues K25 and R69. Residues C98 and C101 each coordinate Zn(2+). Substrate is bound at residue E111. Zn(2+) is bound by residues C116 and C119. Substrate is bound at residue Y124. The 124-residue stretch at 125 to 248 folds into the Nudix hydrolase domain; that stretch reads PQIAPCVIVA…TVARRLIEDT (124 aa). The a divalent metal cation site is built by A158, E174, and E178. The Nudix box signature appears at 159–180; sequence GFVEVGETLEQAVSREVLEESN. 192–199 contributes to the substrate binding site; sequence QPWPFPHS. E219 is an a divalent metal cation binding site. Position 241 (A241) interacts with substrate.

This sequence belongs to the Nudix hydrolase family. NudC subfamily. In terms of assembly, homodimer. The cofactor is Mg(2+). Requires Mn(2+) as cofactor. Zn(2+) is required as a cofactor.

It catalyses the reaction a 5'-end NAD(+)-phospho-ribonucleoside in mRNA + H2O = a 5'-end phospho-adenosine-phospho-ribonucleoside in mRNA + beta-nicotinamide D-ribonucleotide + 2 H(+). The enzyme catalyses NAD(+) + H2O = beta-nicotinamide D-ribonucleotide + AMP + 2 H(+). It carries out the reaction NADH + H2O = reduced beta-nicotinamide D-ribonucleotide + AMP + 2 H(+). Functionally, mRNA decapping enzyme that specifically removes the nicotinamide adenine dinucleotide (NAD) cap from a subset of mRNAs by hydrolyzing the diphosphate linkage to produce nicotinamide mononucleotide (NMN) and 5' monophosphate mRNA. The NAD-cap is present at the 5'-end of some mRNAs and stabilizes RNA against 5'-processing. Has preference for mRNAs with a 5'-end purine. Catalyzes the hydrolysis of a broad range of dinucleotide pyrophosphates. This is NAD-capped RNA hydrolase NudC from Yersinia pseudotuberculosis serotype O:1b (strain IP 31758).